We begin with the raw amino-acid sequence, 450 residues long: MSLLQFSGLFVVWLLCTLFIATLTWFEFRRVRFNFNVFFSLLFLLTFFFGFPLTSVLVFRFDVGVAPPEILLQALLSAGCFYAVYYVTYKTRLRKRTTDVPRRPLFTMNRVETNLTWVILMGIALVSVGIFFMHNGFLLFRLNSYSQIFSSEVSGVALKRFFYFFIPAMLVVYFLRQDSKAWLFFLVSTVAFGLLTYMIVGGTRANIIIAFAIFLFIGIIRGWISLWMLAAAGVLGIVGMFWLALKRYGMNVSGDEAFYTFLYLTRDTFSPWENLALLLQNYDNIDFQGLAPIVRDFYVFIPSWLWPGRPSMVLNSANYFTWEVLNNHSGLAISPTLIGSLVVMGGALFIPLGAIVVGLIIKWFDWLYELGNRETNRYKAAILHSFCFGAIFNMIVLAREGLDSFVSRVVFFIVVFGACLMIAKLLYWLFESAGLIHKRTKSSLRTQVEG.

11 consecutive transmembrane segments (helical) span residues 6–26 (FSGL…LTWF), 37–57 (VFFS…TSVL), 63–83 (VGVA…CFYA), 118–138 (VILM…NGFL), 155–175 (GVAL…VYFL), 181–201 (AWLF…MIVG), 207–227 (IIIA…ISLW), 228–248 (MLAA…LKRY), 341–361 (LVVM…GLII), 378–398 (YKAA…IVLA), and 410–430 (VFFI…YWLF).

Belongs to the WzyE family. Probably part of a complex composed of WzxE, WzyE and WzzE.

It localises to the cell inner membrane. Its pathway is bacterial outer membrane biogenesis; enterobacterial common antigen biosynthesis. Probably involved in the polymerization of enterobacterial common antigen (ECA) trisaccharide repeat units. In Escherichia fergusonii (strain ATCC 35469 / DSM 13698 / CCUG 18766 / IAM 14443 / JCM 21226 / LMG 7866 / NBRC 102419 / NCTC 12128 / CDC 0568-73), this protein is Probable ECA polymerase.